The sequence spans 341 residues: Phosphoribosylformylglycinamidine cyclo-ligase (341 aa).

Belongs to the AIR synthase family.

It localises to the cytoplasm. The enzyme catalyses 2-formamido-N(1)-(5-O-phospho-beta-D-ribosyl)acetamidine + ATP = 5-amino-1-(5-phospho-beta-D-ribosyl)imidazole + ADP + phosphate + H(+). The protein operates within purine metabolism; IMP biosynthesis via de novo pathway; 5-amino-1-(5-phospho-D-ribosyl)imidazole from N(2)-formyl-N(1)-(5-phospho-D-ribosyl)glycinamide: step 2/2. In Lachnospira eligens (strain ATCC 27750 / DSM 3376 / VPI C15-48 / C15-B4) (Eubacterium eligens), this protein is Phosphoribosylformylglycinamidine cyclo-ligase.